We begin with the raw amino-acid sequence, 335 residues long: SAM pointed domain-containing Ets transcription factor (335 aa).

Residues 1 to 20 (MGSASPGLSSVSPSHLLLPP) show a composition bias toward low complexity. 2 disordered regions span residues 1–25 (MGSASPGLSSVSPSHLLLPPDTVSR) and 75–100 (AKAPGASSREEPPEEPEQCPVIDSQA). Residues 129-213 (EVLKDIETAC…AHLDIWKSAA (85 aa)) enclose the PNT domain. The segment at residues 249–332 (IHLWQFLKEL…ISQRLVYQFV (84 aa)) is a DNA-binding region (ETS).

Belongs to the ETS family. Interacts with the DNA-binding domain of the androgen receptor. Interacts with NKX3-1. Expressed in a very restricted set of primarily hormone-regulated epithelial tissues with particularly high expression in the prostate gland. Significantly lower expression is seen in other hormone regulated tissues such as mammary gland, salivary gland, and ovary. Expressed in prostate carcinoma cells.

Its subcellular location is the nucleus. Functionally, may function as an androgen-independent transactivator of the prostate-specific antigen (PSA) promoter. Binds to 5'-GGAT-3' DNA sequences. May play a role in the regulation of the prostate gland and/or prostate cancer development. Acts as a transcriptional activator for SERPINB5 promoter. This is SAM pointed domain-containing Ets transcription factor (SPDEF) from Homo sapiens (Human).